Consider the following 250-residue polypeptide: AA9 family lytic polysaccharide monooxygenase F (250 aa).

An N-terminal signal peptide occupies residues 1–18; sequence MHLKTFSNLLVFVATVAA. His19 contributes to the Cu(2+) binding site. N-linked (GlcNAc...) asparagine glycans are attached at residues Asn24 and Asn85. 2 disulfide bridges follow: Cys70–Cys199 and Cys169–Cys250. His108 is a Cu(2+) binding site. Residue Asn146 is glycosylated (N-linked (GlcNAc...) asparagine). Residues His185 and Gln194 each coordinate O2. Cu(2+) is bound at residue Tyr196.

It belongs to the polysaccharide monooxygenase AA9 family. The cofactor is Cu(2+).

The protein resides in the secreted. The catalysed reaction is [(1-&gt;4)-beta-D-glucosyl]n+m + reduced acceptor + O2 = 4-dehydro-beta-D-glucosyl-[(1-&gt;4)-beta-D-glucosyl]n-1 + [(1-&gt;4)-beta-D-glucosyl]m + acceptor + H2O.. In terms of biological role, lytic polysaccharide monooxygenase (LPMO) that depolymerizes crystalline and amorphous polysaccharides via the oxidation of scissile alpha- or beta-(1-4)-glycosidic bonds, yielding C1 and C4 oxidation products. Catalysis by LPMOs requires the reduction of the active-site copper from Cu(II) to Cu(I) by a reducing agent and H(2)O(2) or O(2) as a cosubstrate. The polypeptide is AA9 family lytic polysaccharide monooxygenase F (Botryotinia fuckeliana (strain B05.10) (Noble rot fungus)).